The following is a 425-amino-acid chain: Sucrose-phosphatase 1 (425 aa).

Belongs to the sucrose phosphatase family. Homodimer. Mg(2+) serves as cofactor.

The enzyme catalyses sucrose 6(F)-phosphate + H2O = sucrose + phosphate. Its pathway is glycan biosynthesis; sucrose biosynthesis; sucrose from D-fructose 6-phosphate and UDP-alpha-D-glucose: step 2/2. Its activity is regulated as follows. Inhibited by EDTA. Its function is as follows. Catalyzes the final step of sucrose synthesis. This is Sucrose-phosphatase 1 (SPP1) from Nicotiana tabacum (Common tobacco).